Reading from the N-terminus, the 450-residue chain is GTPase Der (450 aa).

2 consecutive EngA-type G domains span residues 3–170 (PTIA…LATG) and 183–356 (LKIA…AECS). Residues 9–16 (GRPNVGKS), 56–60 (DTGGL), 122–125 (NKVD), 189–196 (GRPNAGKS), 236–240 (DTAGV), and 301–304 (NKID) contribute to the GTP site. The KH-like domain occupies 357–441 (LRISTGQLNR…PLNIVFRSTF (85 aa)).

The protein belongs to the TRAFAC class TrmE-Era-EngA-EngB-Septin-like GTPase superfamily. EngA (Der) GTPase family. Associates with the 50S ribosomal subunit.

In terms of biological role, GTPase that plays an essential role in the late steps of ribosome biogenesis. The sequence is that of GTPase Der from Maridesulfovibrio salexigens (strain ATCC 14822 / DSM 2638 / NCIMB 8403 / VKM B-1763) (Desulfovibrio salexigens).